The sequence spans 31 residues: Cytochrome b6-f complex subunit 6 (31 aa).

Residues 3–23 (TITSYFGFLLAALTITPALFI) traverse the membrane as a helical segment.

Belongs to the PetL family. In terms of assembly, the 4 large subunits of the cytochrome b6-f complex are cytochrome b6, subunit IV (17 kDa polypeptide, PetD), cytochrome f and the Rieske protein, while the 4 small subunits are PetG, PetL, PetM and PetN. The complex functions as a dimer.

It localises to the plastid. Its subcellular location is the chloroplast thylakoid membrane. In terms of biological role, component of the cytochrome b6-f complex, which mediates electron transfer between photosystem II (PSII) and photosystem I (PSI), cyclic electron flow around PSI, and state transitions. PetL is important for photoautotrophic growth as well as for electron transfer efficiency and stability of the cytochrome b6-f complex. This Zea mays (Maize) protein is Cytochrome b6-f complex subunit 6.